A 296-amino-acid chain; its full sequence is L-ornithine N(alpha)-acyltransferase (296 aa).

Belongs to the acetyltransferase family. OlsB subfamily.

The catalysed reaction is a (3R)-hydroxyacyl-[ACP] + L-ornithine = a lyso-ornithine lipid + holo-[ACP] + H(+). The protein operates within lipid metabolism. In terms of biological role, catalyzes the first step in the biosynthesis of ornithine lipids, which are phosphorus-free membrane lipids. Catalyzes the 3-hydroxyacyl-acyl carrier protein-dependent acylation of ornithine to form lyso-ornithine lipid (LOL). The sequence is that of L-ornithine N(alpha)-acyltransferase from Rhizobium meliloti (strain 1021) (Ensifer meliloti).